The following is a 437-amino-acid chain: Ribosomal protein uS12 methylthiotransferase RimO (437 aa).

The region spanning 5 to 116 (PTIAISHLGC…IVEIVERVET (112 aa)) is the MTTase N-terminal domain. [4Fe-4S] cluster contacts are provided by Cys14, Cys50, Cys79, Cys154, Cys158, and Cys161. The region spanning 140–369 (TTSEGVAYLR…MLTQQPISER (230 aa)) is the Radical SAM core domain. The TRAM domain occupies 372–437 (QAYIGQTVDV…DTYDLYGEIV (66 aa)).

Belongs to the methylthiotransferase family. RimO subfamily. The cofactor is [4Fe-4S] cluster.

Its subcellular location is the cytoplasm. The enzyme catalyses L-aspartate(89)-[ribosomal protein uS12]-hydrogen + (sulfur carrier)-SH + AH2 + 2 S-adenosyl-L-methionine = 3-methylsulfanyl-L-aspartate(89)-[ribosomal protein uS12]-hydrogen + (sulfur carrier)-H + 5'-deoxyadenosine + L-methionine + A + S-adenosyl-L-homocysteine + 2 H(+). In terms of biological role, catalyzes the methylthiolation of an aspartic acid residue of ribosomal protein uS12. The sequence is that of Ribosomal protein uS12 methylthiotransferase RimO from Microcystis aeruginosa (strain NIES-843 / IAM M-2473).